The following is a 307-amino-acid chain: Sex-lethal homolog (307 aa).

RRM domains are found at residues 85–163 (TNLI…YARP) and 171–251 (TNLY…LAEE). The segment covering 285 to 299 (HRGRHNKNRNQKPHP) has biased composition (basic residues). Residues 285–307 (HRGRHNKNRNQKPHPYHNPQKFI) are disordered.

The protein resides in the nucleus. Unknown; apparently not involved in somatic sex determination. The chain is Sex-lethal homolog (SXL) from Chrysomya rufifacies (Hairy maggot blowfly).